The sequence spans 343 residues: Acetylglutamate kinase (343 aa).

Substrate contacts are provided by residues 98-99 (GG), arginine 120, and asparagine 219.

The protein belongs to the acetylglutamate kinase family. ArgB subfamily.

Its subcellular location is the cytoplasm. The catalysed reaction is N-acetyl-L-glutamate + ATP = N-acetyl-L-glutamyl 5-phosphate + ADP. The protein operates within amino-acid biosynthesis; L-arginine biosynthesis; N(2)-acetyl-L-ornithine from L-glutamate: step 2/4. Catalyzes the ATP-dependent phosphorylation of N-acetyl-L-glutamate. The sequence is that of Acetylglutamate kinase from Frankia alni (strain DSM 45986 / CECT 9034 / ACN14a).